Here is a 393-residue protein sequence, read N- to C-terminus: Fasciculation and elongation protein zeta-1 (393 aa).

Positions M1–P41 are disordered. Position 58 is a phosphoserine (S58). The segment at N130 to D154 is disordered. A coiled-coil region spans residues S231–S299. A phosphoserine mark is found at S299 and S317.

It belongs to the zygin family. In terms of assembly, homodimer. Interacts with UBE4B and SAP30L. Interacts with SCOC and ULK1; SCOC interferes with ULK1-binding to FEZ1. Directly interacts with SCOC and UVRAG. Stabilizes the interaction between SCOC and UVRAG during amino acid starvation. Interacts with the NH2-terminal variable region (V1) of PKC zeta and weakly with that of PKC epsilon. Phosphorylated by protein kinase C zeta; which enhances interaction with UBE4B and polyubiquitination. In terms of processing, polyubiquitinated in a UBE4B-dependent manner; which does not lead to proteasomal degradation and may be important for neurogenic activity. Polyubiquitin linkage seems to be mainly through Lys-26. Brain.

The protein localises to the cytoplasm. Its subcellular location is the cytoskeleton. It localises to the microtubule organizing center. It is found in the centrosome. The protein resides in the cell membrane. Functionally, may be involved in axonal outgrowth as component of the network of molecules that regulate cellular morphology and axon guidance machinery. May participate in the transport of mitochondria and other cargos along microtubules. The polypeptide is Fasciculation and elongation protein zeta-1 (Fez1) (Rattus norvegicus (Rat)).